The chain runs to 115 residues: Guanylin (115 aa).

The signal sequence occupies residues 1-23; it reads MNAWLLSVLCLLGALAVLVEGVT. A propeptide spanning residues 24–100 is cleaved from the precursor; sequence VQDGDLSFPL…LQRLEAIAQD (77 aa). 3 cysteine pairs are disulfide-bonded: cysteine 69-cysteine 82, cysteine 104-cysteine 112, and cysteine 107-cysteine 115.

This sequence belongs to the guanylin family. Intestine and in low abundance in adrenal gland, kidney, and uterus/oviduct.

Its subcellular location is the secreted. Functionally, endogenous activator of intestinal guanylate cyclase. It stimulates this enzyme through the same receptor binding region as the heat-stable enterotoxins. The sequence is that of Guanylin (Guca2a) from Rattus norvegicus (Rat).